A 492-amino-acid polypeptide reads, in one-letter code: Glutamyl-tRNA(Gln) amidotransferase subunit A (492 aa).

Catalysis depends on charge relay system residues K84 and S159. Residue S183 is the Acyl-ester intermediate of the active site.

It belongs to the amidase family. GatA subfamily. In terms of assembly, heterotrimer of A, B and C subunits.

It catalyses the reaction L-glutamyl-tRNA(Gln) + L-glutamine + ATP + H2O = L-glutaminyl-tRNA(Gln) + L-glutamate + ADP + phosphate + H(+). In terms of biological role, allows the formation of correctly charged Gln-tRNA(Gln) through the transamidation of misacylated Glu-tRNA(Gln) in organisms which lack glutaminyl-tRNA synthetase. The reaction takes place in the presence of glutamine and ATP through an activated gamma-phospho-Glu-tRNA(Gln). This is Glutamyl-tRNA(Gln) amidotransferase subunit A from Anaeromyxobacter dehalogenans (strain 2CP-C).